A 492-amino-acid polypeptide reads, in one-letter code: La-related protein 6 (492 aa).

Residues 1-87 form a disordered region; it reads MAQLGEQTLP…REDLEPEWRP (87 aa). The residue at position 2 (Ala2) is an N-acetylalanine. Positions 24-37 are enriched in acidic residues; that stretch reads EAEDLEDLEEEDEG. Residues Ser56 and Ser58 each carry the phosphoserine modification. Residues 65–74 show a composition bias toward polar residues; it reads GHSSATTSGG. Residues 86–177 form the HTH La-type RNA-binding domain; that stretch reads RPPDEELIRK…RRTTPVPLFP (92 aa). The RRM domain maps to 184-296; that stretch reads KMLLVYDLHL…KAVLIGMKPP (113 aa). A Nuclear export signal motif is present at residues 186-193; it reads LLVYDLHL. Disordered stretches follow at residues 292-398 and 466-492; these read GMKP…KSPL and VGVL…RACV. Positions 296 to 302 match the Nuclear localization signal motif; sequence PKKKPLK. Over residues 332–346 the composition is skewed to low complexity; that stretch reads DESSANSSSDPESNP. A compositionally biased stretch (polar residues) spans 359–386; the sequence is NKLSPSGHQNIFLSPNASPCSSPWSSPL. Positions 427 to 485 constitute an SUZ-C domain; it reads PSGSPWVRRRRQAEMGTQEKSPGASPLLSRRMQTADGLPVGVLRLPRGPDNTRGFHGGH. Over residues 483–492 the composition is skewed to basic and acidic residues; the sequence is GGHERGRACV.

Interacts (via the HTH domain) with VIM/vimentin. Interacts (via C-terminus) with non-muscle myosin MYH10. Interacts (via C-terminus) with DHX9. As to expression, expressed in numerous tissues. Highest expression in heart and brain, intermediate in kidney, skeletal muscle and testis, lowest expression in testis (at protein level).

It localises to the cytoplasm. The protein localises to the nucleus. Regulates the coordinated translation of type I collagen alpha-1 and alpha-2 mRNAs, CO1A1 and CO1A2. Stabilizes mRNAs through high-affinity binding of a stem-loop structure in their 5' UTR. This regulation requires VIM and MYH10 filaments, and the helicase DHX9. This Mus musculus (Mouse) protein is La-related protein 6 (Larp6).